The following is a 142-amino-acid chain: Hemoglobin subunit theta-1 (142 aa).

The region spanning 2 to 142 is the Globin domain; the sequence is ALSAEDRALV…VISALVSEYR (141 aa). Residues histidine 59 and histidine 88 each coordinate heme b.

Belongs to the globin family.

This is Hemoglobin subunit theta-1 (HBQ1) from Homo sapiens (Human).